The following is a 207-amino-acid chain: 2,3-bisphosphoglycerate-dependent phosphoglycerate mutase (207 aa).

Substrate is bound by residues 10 to 17 (RHGQSEWN), 23 to 24 (TG), Arg62, 89 to 92 (ERDY), Lys100, 116 to 117 (RR), and 160 to 161 (GN). The active-site Tele-phosphohistidine intermediate is His11. The active-site Proton donor/acceptor is Glu89.

The protein belongs to the phosphoglycerate mutase family. BPG-dependent PGAM subfamily. In terms of assembly, homodimer.

The catalysed reaction is (2R)-2-phosphoglycerate = (2R)-3-phosphoglycerate. It participates in carbohydrate degradation; glycolysis; pyruvate from D-glyceraldehyde 3-phosphate: step 3/5. In terms of biological role, catalyzes the interconversion of 2-phosphoglycerate and 3-phosphoglycerate. The protein is 2,3-bisphosphoglycerate-dependent phosphoglycerate mutase of Xanthobacter autotrophicus (strain ATCC BAA-1158 / Py2).